Here is a 419-residue protein sequence, read N- to C-terminus: Tyrosine--tRNA ligase (419 aa).

Tyrosine 42 provides a ligand contact to L-tyrosine. Positions 47–56 match the 'HIGH' region motif; sequence ATAPSLHVGS. L-tyrosine is bound by residues tyrosine 179 and glutamine 183. The short motif at 239–243 is the 'KMSKS' region element; the sequence is KMGKT. Residue lysine 242 coordinates ATP. The region spanning 353-418 is the S4 RNA-binding domain; the sequence is VVLAALFADA…GKKKIVLVKP (66 aa).

Belongs to the class-I aminoacyl-tRNA synthetase family. TyrS type 1 subfamily. Homodimer.

It is found in the cytoplasm. The enzyme catalyses tRNA(Tyr) + L-tyrosine + ATP = L-tyrosyl-tRNA(Tyr) + AMP + diphosphate + H(+). Functionally, catalyzes the attachment of tyrosine to tRNA(Tyr) in a two-step reaction: tyrosine is first activated by ATP to form Tyr-AMP and then transferred to the acceptor end of tRNA(Tyr). This chain is Tyrosine--tRNA ligase, found in Caulobacter vibrioides (strain ATCC 19089 / CIP 103742 / CB 15) (Caulobacter crescentus).